We begin with the raw amino-acid sequence, 185 residues long: Ribosome-recycling factor (185 aa).

The disordered stretch occupies residues 137 to 159 (EDLKADEKAKDISEDDRKRMEDE).

The protein belongs to the RRF family.

The protein localises to the cytoplasm. Responsible for the release of ribosomes from messenger RNA at the termination of protein biosynthesis. May increase the efficiency of translation by recycling ribosomes from one round of translation to another. The polypeptide is Ribosome-recycling factor (Erythrobacter litoralis (strain HTCC2594)).